A 62-amino-acid polypeptide reads, in one-letter code: MSDKKLVNVTLVKSTIGRLPAHKACVAGLGLRKMHQTVAVIDTPENRGMINKVSYLLKVEEA.

Belongs to the universal ribosomal protein uL30 family. In terms of assembly, part of the 50S ribosomal subunit.

The polypeptide is Large ribosomal subunit protein uL30 (Hydrogenovibrio crunogenus (strain DSM 25203 / XCL-2) (Thiomicrospira crunogena)).